A 637-amino-acid chain; its full sequence is Transcription factor GLABRA 3 (637 aa).

The 50-residue stretch at 437-486 folds into the bHLH domain; it reads DETGNHAVLEKKRREKLNERFMTLRKIIPSINKIDKVSILDDTIEYLQEL. The tract at residues 497 to 521 is disordered; the sequence is RESTDTETRGTMTMKRKKPCDAGER. Positions 541-637 are binding with MYB0/GL1 and MYB23; it reads NVGEAEPADT…EALQRVAWIC (97 aa).

As to quaternary structure, efficient DNA binding requires dimerization with another bHLH protein. Homodimer and heterodimer with BHLH2. Interacts directly with TTG1 and MYB0/GL1 to form a complex. Its interaction with TRY prevents MYB0/GL1 binding. Interacts with MYB75/PAP1, MYB90/PAP2, TT2, CPC, MYB23 and MYB66/WER. Interacts with MYB82. Mostly expressed in roots and flowers. Also present in stems and leaves, and, to a lower extent, in hypocotyls. Expressed in epidermal root hair cells (trichoblasts) and moves to root hairless cells (atrichoblasts) by a cell-to-cell movement through plasmodesmata (at protein level).

The protein resides in the nucleus. Transcription activator, when associated with MYB75/PAP1, MYB90/PAP2 or TT2. Involved in epidermal cell fate specification. Negatively regulates stomata formation, but, in association with TTG1 and MYB0/GL1, promotes trichome formation, branching and endoreplication. Also regulates trichome cell wall maturation. Together with MYB66/WER, promotes the formation of non-hair cells in root epidermis cells in the N position. Whereas together with CPC, promotes the formation of hair cells in root epidermis cells in the H position by inhibiting non-hair cell formation. Also seems to play a role in the activation of anthocyanin biosynthesis, probably together with MYB75/PAP1. Activates the transcription of GL2. The sequence is that of Transcription factor GLABRA 3 (GL3) from Arabidopsis thaliana (Mouse-ear cress).